The chain runs to 749 residues: Homeobox-leucine zipper protein ROC7 (749 aa).

The segment at 26 to 98 is disordered; it reads LDQHQQHQHQ…KKRYHRHTQH (73 aa). Over residues 46–57 the composition is skewed to basic and acidic residues; sequence SDGRAPRDELEM. Over residues 68–78 the composition is skewed to gly residues; that stretch reads SGGGGGGGGSG. The segment covering 86–97 has biased composition (basic residues); sequence RPRKKRYHRHTQ. Residues 88–147 constitute a DNA-binding region (homeobox); it reads RKKRYHRHTQHQIQELEAFFKECPHPDDKQRKELSRELGLEPLQVKFWFQNKRTQMKTQH. Residues 137 to 218 are a coiled coil; the sequence is QNKRTQMKTQ…DRISAIAAKY (82 aa). Residues 256–494 enclose the START domain; that stretch reads ADFDKPLVIE…LERQCERLAS (239 aa).

This sequence belongs to the HD-ZIP homeobox family. Class IV subfamily.

It localises to the nucleus. In terms of biological role, probable transcription factor. In Oryza sativa subsp. indica (Rice), this protein is Homeobox-leucine zipper protein ROC7 (ROC7).